Consider the following 37-residue polypeptide: Large ribosomal subunit protein bL36c (37 aa).

Belongs to the bacterial ribosomal protein bL36 family.

Its subcellular location is the plastid. The protein localises to the chloroplast. The polypeptide is Large ribosomal subunit protein bL36c (Welwitschia mirabilis (Tree tumbo)).